The following is a 407-amino-acid chain: Accessory Sec system protein translocase subunit SecY2 (407 aa).

10 consecutive transmembrane segments (helical) span residues 22 to 42, 68 to 88, 108 to 128, 136 to 156, 169 to 189, 191 to 211, 245 to 265, 280 to 300, 343 to 363, and 366 to 386; these read IAFTILILLIYILGSKITIVD, LNVFSLGLGPWLTAMIIISLI, EKFLTLGLSIIQGYFVINQFV, FTELLLLLILVTGAMLMMWLA, PIVLLSVIKSMFTQSLPIVSI, ILMLVVMVILIIVALFILLLT, ISIMISLSVFLLLTSTINLIF, FGHYMGVTIYLILQTVLGYLL, WFGTTIVTAIIGVPLYISLLV, and LSEYIYFAVQLMIMVYLAMNI.

Belongs to the SecY/SEC61-alpha family. SecY2 subfamily. As to quaternary structure, component of the accessory SecA2/SecY2 protein translocase complex required to export cell wall proteins. May form heterotrimers with SecE and SecG subunits.

It is found in the cell membrane. Its function is as follows. Part of the accessory SecA2/SecY2 system specifically required for export of possible cell wall proteins. The central subunit of a protein translocation channel. This is Accessory Sec system protein translocase subunit SecY2 from Staphylococcus pseudintermedius (strain ED99).